Here is a 244-residue protein sequence, read N- to C-terminus: MNLIINDKTASSSVGQTIGKAARLNHAHVGYVCGGHGLCQACYITVQEGADCLAPLTDVEKAFLSPRQIAAGGRIACQATIAKEGTVKVLSRPEEVRRMVFSNPFQLIGYAADMGKDTAQQIVPGVQNLIGRIQRGEMGGKDALGDMIESIQGAAGLVVEAIQQGPMALPIPFKEQIADLISKLPLPQIQLPSISLPQLPSISFPQLPFSLPKLPFSLPFLPQQPQATASLEKVTITVQPPAKD.

Residues 1-95 form the 2Fe-2S ferredoxin-type domain; it reads MNLIINDKTA…TVKVLSRPEE (95 aa). The [2Fe-2S] cluster site is built by cysteine 33, cysteine 39, cysteine 42, and cysteine 77.

Requires [2Fe-2S] cluster as cofactor.

It is found in the chlorosome. Its function is as follows. Could play a direct role in the oxidation or reduction of the quenching species formed in the chlorosome. This Chlorobaculum tepidum (strain ATCC 49652 / DSM 12025 / NBRC 103806 / TLS) (Chlorobium tepidum) protein is Chlorosome protein I (csmI).